The primary structure comprises 785 residues: Endonuclease MutS2 (785 aa).

332-339 (GPNTGGKT) serves as a coordination point for ATP. The Smr domain occupies 710–785 (IDLRGLDAEE…GDGATIVELK (76 aa)).

Belongs to the DNA mismatch repair MutS family. MutS2 subfamily. In terms of assembly, homodimer. Binds to stalled ribosomes, contacting rRNA.

Its function is as follows. Endonuclease that is involved in the suppression of homologous recombination and thus may have a key role in the control of bacterial genetic diversity. Functionally, acts as a ribosome collision sensor, splitting the ribosome into its 2 subunits. Detects stalled/collided 70S ribosomes which it binds and splits by an ATP-hydrolysis driven conformational change. Acts upstream of the ribosome quality control system (RQC), a ribosome-associated complex that mediates the extraction of incompletely synthesized nascent chains from stalled ribosomes and their subsequent degradation. Probably generates substrates for RQC. This Clostridium botulinum (strain Eklund 17B / Type B) protein is Endonuclease MutS2.